Here is a 405-residue protein sequence, read N- to C-terminus: L-rhamnonate dehydratase (405 aa).

His-33 and Arg-59 together coordinate substrate. Residues Asp-226, Glu-252, and Glu-280 each contribute to the Mg(2+) site. The active-site Proton acceptor is His-329. Residue Glu-349 participates in substrate binding.

This sequence belongs to the mandelate racemase/muconate lactonizing enzyme family. RhamD subfamily. In terms of assembly, homooctamer; tetramer of dimers. Requires Mg(2+) as cofactor.

It carries out the reaction L-rhamnonate = 2-dehydro-3-deoxy-L-rhamnonate + H2O. Its function is as follows. Catalyzes the dehydration of L-rhamnonate to 2-keto-3-deoxy-L-rhamnonate (KDR). The chain is L-rhamnonate dehydratase from Salmonella paratyphi A (strain AKU_12601).